Here is a 310-residue protein sequence, read N- to C-terminus: 4-hydroxyproline epimerase (310 aa).

The active-site Proton acceptor is Cys-88. Residues 89–90 (GH), His-208, and Asp-232 each bind substrate. The active-site Proton donor is Cys-236. 237 to 238 (GT) contributes to the substrate binding site.

It belongs to the proline racemase family. In terms of assembly, homodimer.

The enzyme catalyses trans-4-hydroxy-L-proline = cis-4-hydroxy-D-proline. With respect to regulation, inhibited by iodoacetate, iodoacetamide and by high amounts (10 mM) of pyrrole-2-carboxylic acid (PYC). Not inhibited by PYC at 1 mM. In terms of biological role, allows intracellular utilization of 4-hydroxyproline, one of the major constituents of host collagen, by converting 4-hydroxy-L-proline to 4-hydroxy-D-proline, which can be further metabolized by intracellular 4-hydroxy-D-proline oxidases. In Burkholderia pseudomallei (strain K96243), this protein is 4-hydroxyproline epimerase.